A 368-amino-acid polypeptide reads, in one-letter code: Somatostatin receptor type 5 (368 aa).

The Extracellular portion of the chain corresponds to 1 to 45 (MEPLFPASPLTTWNTSSVVPSGSGDENGTLAGLGPSPGARAVVVP). N-linked (GlcNAc...) asparagine glycans are attached at residues N14 and N27. Residues 46–66 (VLYLLVCAVGLGGNTLVIYVV) form a helical membrane-spanning segment. Topologically, residues 67–77 (LRHAKMKTVTN) are cytoplasmic. A helical transmembrane segment spans residues 78-98 (IYILNLAVADVLLMLGLPFVA). At 99–115 (TQNAISYWPFGPVLCRL) the chain is on the extracellular side. An intrachain disulfide couples C113 to C188. A helical transmembrane segment spans residues 116 to 136 (VMTLDGINQFTSIFCLTVMSV). At 137–158 (DRYLAVVHPIRSARWRRPRVAK) the chain is on the cytoplasmic side. Residues 159–179 (LASAAVWAFSLVMSLPLVVFA) form a helical membrane-spanning segment. Topologically, residues 180–207 (DIQEGWNTCNLSWPEPVGLWGAVFIIYT) are extracellular. N-linked (GlcNAc...) asparagine glycosylation is present at N189. A helical membrane pass occupies residues 208–228 (SVLGFFGPLLVICLCYLLIVV). Topologically, residues 229–251 (KLKASGVRVGSTRRRSERKVTRM) are cytoplasmic. The chain crosses the membrane as a helical span at residues 252-272 (VVVVVLVFAGCWLPFFIVNIV). At 273–286 (NLAFALPEEPASAG) the chain is on the extracellular side. Residues 287-309 (AYFFVVVLSYANSCANPLLYGFL) form a helical membrane-spanning segment. The Cytoplasmic segment spans residues 310-368 (SDNFRQSFRKVLCLRKGYGAGAEDADATEPQPGPSSRLQEAMMPVRSCKANGLMQTSKL). A lipid anchor (S-palmitoyl cysteine; by ZDHHC5) is attached at C322.

It belongs to the G-protein coupled receptor 1 family. Heterodimer with SSTR2. Heterodimerization with SSTR2 increases cell growth inhibition activity of SSTR2. In terms of processing, palmitoylated by ZDHHC5, but not ZDHHC3, nor ZDHHC8. Palmitoylation creates an additional intracellular loop which is thought to be important for efficient coupling to G-proteins and may target the protein to lipid rafts.

The protein localises to the cell membrane. Receptor for somatostatin 28 and to a lesser extent for somatostatin-14. The activity of this receptor is mediated by G proteins which inhibit adenylyl cyclase. Increases cell growth inhibition activity of SSTR2 following heterodimerization. This Bos taurus (Bovine) protein is Somatostatin receptor type 5 (SSTR5).